The primary structure comprises 377 residues: Phosphoserine aminotransferase (377 aa).

Arginine 43 serves as a coordination point for L-glutamate. Tryptophan 105, threonine 164, aspartate 189, and glutamine 212 together coordinate pyridoxal 5'-phosphate. Residue lysine 213 is modified to N6-(pyridoxal phosphate)lysine. 254–255 (NT) serves as a coordination point for pyridoxal 5'-phosphate.

It belongs to the class-V pyridoxal-phosphate-dependent aminotransferase family. SerC subfamily. As to quaternary structure, homodimer. The cofactor is pyridoxal 5'-phosphate.

Its subcellular location is the cytoplasm. The catalysed reaction is O-phospho-L-serine + 2-oxoglutarate = 3-phosphooxypyruvate + L-glutamate. It carries out the reaction 4-(phosphooxy)-L-threonine + 2-oxoglutarate = (R)-3-hydroxy-2-oxo-4-phosphooxybutanoate + L-glutamate. It participates in amino-acid biosynthesis; L-serine biosynthesis; L-serine from 3-phospho-D-glycerate: step 2/3. It functions in the pathway cofactor biosynthesis; pyridoxine 5'-phosphate biosynthesis; pyridoxine 5'-phosphate from D-erythrose 4-phosphate: step 3/5. Catalyzes the reversible conversion of 3-phosphohydroxypyruvate to phosphoserine and of 3-hydroxy-2-oxo-4-phosphonooxybutanoate to phosphohydroxythreonine. This is Phosphoserine aminotransferase from Bordetella bronchiseptica (strain ATCC BAA-588 / NCTC 13252 / RB50) (Alcaligenes bronchisepticus).